The primary structure comprises 31 residues: Morintide mO3 (31 aa).

The region spanning 1-30 (NRLCCSQYGFCGTTSEYCSRANGCQSNCWG) is the Chitin-binding type-1 domain. 2 disulfides stabilise this stretch: C4/C18 and C24/C28.

In terms of tissue distribution, seeds (at protein level).

In terms of biological role, chitin-binding protein which functions in defense against chitin-containing fungal pathogens. The chain is Morintide mO3 from Moringa oleifera (Horseradish tree).